A 319-amino-acid polypeptide reads, in one-letter code: ATP-dependent 6-phosphofructokinase (319 aa).

An ATP-binding site is contributed by Gly-11. ADP is bound at residue 21–25 (RAVVR). ATP is bound by residues 72 to 73 (RC) and 102 to 105 (GDGS). Asp-103 contacts Mg(2+). 125–127 (TID) contacts substrate. The active-site Proton acceptor is Asp-127. Arg-154 is a binding site for ADP. Residues Arg-162 and 169–171 (MGR) contribute to the substrate site. ADP contacts are provided by residues 185-187 (GAE), Arg-211, and 213-215 (KKH). Substrate is bound by residues Glu-222, Arg-243, and 249–252 (HIQR).

Belongs to the phosphofructokinase type A (PFKA) family. ATP-dependent PFK group I subfamily. Prokaryotic clade 'B1' sub-subfamily. In terms of assembly, homotetramer. Requires Mg(2+) as cofactor.

It localises to the cytoplasm. The catalysed reaction is beta-D-fructose 6-phosphate + ATP = beta-D-fructose 1,6-bisphosphate + ADP + H(+). It participates in carbohydrate degradation; glycolysis; D-glyceraldehyde 3-phosphate and glycerone phosphate from D-glucose: step 3/4. With respect to regulation, allosterically activated by ADP and other diphosphonucleosides, and allosterically inhibited by phosphoenolpyruvate. Functionally, catalyzes the phosphorylation of D-fructose 6-phosphate to fructose 1,6-bisphosphate by ATP, the first committing step of glycolysis. This chain is ATP-dependent 6-phosphofructokinase, found in Bacillus pumilus (strain SAFR-032).